The primary structure comprises 723 residues: Probable G-protein coupled receptor 149 (723 aa).

The Extracellular segment spans residues 1 to 31 (MSVMPSNLSLNGTSFFAENHSIMDKPNEQRT). N-linked (GlcNAc...) asparagine glycans are attached at residues Asn7, Asn11, and Asn19. The chain crosses the membrane as a helical span at residues 32–52 (LNVFLFCSTFIIAFTVLLGSI). The Cytoplasmic segment spans residues 53-69 (YSLVSLLKLQNKSTISM). A helical membrane pass occupies residues 70-90 (IVTSLSIDDLISIVPVIIFML). Over 91–106 (TQWSSDALPQPLCTTS) the chain is Extracellular. Cys103 and Cys181 are disulfide-bonded. Residues 107–127 (ALIYLFQGISSNLKGSLIVSY) form a helical membrane-spanning segment. Topologically, residues 128–148 (NFYSINKTETMNCSASKRRVS) are cytoplasmic. The helical transmembrane segment at 149-169 (MVWAILSIWIVSLLICILPLC) threads the bilayer. Residues 170 to 188 (GWGKYIPTTWGCFTDHASS) lie on the Extracellular side of the membrane. A helical transmembrane segment spans residues 189 to 209 (YILFLFIVYSLCFCLLTVLSV). Over 210–306 (PLTYQLLCSD…SFTVGFAQKR (97 aa)) the chain is Cytoplasmic. Residues 307–327 (FSLILALTKVILWLPMMIQMV) form a helical membrane-spanning segment. Over 328-338 (VQHITGYQSFS) the chain is Extracellular. The helical transmembrane segment at 339–359 (FETLSFLLTLLAATVTPVFVL) threads the bilayer. Residues 360–723 (SEHWIHLPCG…RKREEDGNSN (364 aa)) are Cytoplasmic-facing. Positions 451-513 (TTDSARPGPA…ERRLSHEEGH (63 aa)) are disordered. Positions 501 to 513 (EGPERRLSHEEGH) are enriched in basic and acidic residues.

Belongs to the G-protein coupled receptor 1 family. Specific expression in peripheral nervous system, including nerve growth factor-dependent sensory and sympathetic neurons, as well as enteric neurons.

The protein localises to the cell membrane. In terms of biological role, orphan receptor. The protein is Probable G-protein coupled receptor 149 (GPR149) of Gallus gallus (Chicken).